Here is a 592-residue protein sequence, read N- to C-terminus: Guanylate-binding protein 1 (592 aa).

The segment at 1–311 (MASEIHMTGP…NAISSGDLPC (311 aa)) is GTPase domain (Globular). The GB1/RHD3-type G domain occupies 35-278 (TQPMVVVAIV…FCSYIFSNSK (244 aa)). Residues 45–52 (GLYRTGKS), 67–69 (LGS), and 97–101 (DTEGL) contribute to the GTP site. Ser-156 carries the post-translational modification Phosphoserine; by PIM1. Residues Lys-207, Lys-209, Lys-210, Lys-382, Lys-562, Lys-567, Lys-573, and Lys-587 each participate in a (Microbial infection) Glycyl lysine isopeptide (Lys-Gly) (interchain with G-Cter in ubiquitin) cross-link. The residue at position 589 (Cys-589) is a Cysteine methyl ester. Cys-589 carries S-farnesyl cysteine lipidation. The residue at position 590 (Thr-590) is a Phosphothreonine; by PIM1. Positions 590 to 592 (TIS) are cleaved as a propeptide — removed in mature form.

Belongs to the TRAFAC class dynamin-like GTPase superfamily. GB1/RHD3 GTPase family. GB1 subfamily. Homodimer; homodimerization occurs upon GTP-binding and is required for the second hydrolysis step from GDP to GMP. Undergoes conformational changes and oligomerization upon GTP-binding and hydrolysis. Heterodimer with other family members, including GBP2, GBP3, GBP4 and GBP5. Dimerization regulates subcellular location to membranous structures. Interacts with SQSTM1. Interacts (when phosphorylated) with 14-3-3 protein sigma (SFN); leading to GBP1 retention in the cytosol and inactivation. Isoprenylation is required for proper subcellular location. In terms of processing, phosphorylated at Ser-156 by PIM1 in absence of infection, inhibits GBP1: phosphorylation promotes interaction with 14-3-3 protein sigma (SFN), leading to GBP1 retention in the cytosol. Dephosphorylated in response to infection, liberating GBP1. Post-translationally, (Microbial infection) Ubiquitinated by S.flexneri IpaH9.8, leading to its degradation by the proteasome, thereby preventing its ability to promote host defense against bacterial infection.

The protein localises to the cytoplasmic vesicle membrane. The protein resides in the golgi apparatus membrane. It localises to the cell membrane. It is found in the cytoplasm. Its subcellular location is the cytosol. The protein localises to the secreted. The enzyme catalyses GTP + H2O = GDP + phosphate + H(+). It catalyses the reaction GDP + H2O = GMP + phosphate + H(+). In terms of biological role, interferon (IFN)-inducible GTPase that plays important roles in innate immunity against a diverse range of bacterial, viral and protozoan pathogens. Hydrolyzes GTP to GMP in two consecutive cleavage reactions: GTP is first hydrolyzed to GDP and then to GMP in a processive manner. Following infection, recruited to the pathogen-containing vacuoles or vacuole-escaped bacteria and promotes both inflammasome assembly and autophagy. Acts as a positive regulator of inflammasome assembly by facilitating the detection of inflammasome ligands from pathogens. Involved in the lysis of pathogen-containing vacuoles, releasing pathogens into the cytosol. Following pathogen release in the cytosol, forms a protein coat in a GTPase-dependent manner that encapsulates pathogens and promotes the detection of ligands by pattern recognition receptors. Plays a key role in inflammasome assembly in response to infection by Gram-negative bacteria: following pathogen release in the cytosol, forms a protein coat that encapsulates Gram-negative bacteria and directly binds to lipopolysaccharide (LPS), disrupting the O-antigen barrier and unmasking lipid A that is that detected by the non-canonical inflammasome effector CASP4/CASP11. Also promotes recruitment of proteins that mediate bacterial cytolysis, leading to release double-stranded DNA (dsDNA) that activates the AIM2 inflammasome. Involved in autophagy by regulating bacteriolytic peptide generation via its interaction with ubiquitin-binding protein SQSTM1, which delivers monoubiquitinated proteins to autolysosomes for the generation of bacteriolytic peptides. Confers protection to several pathogens, including the bacterial pathogens L.monocytogenes and M.bovis BCG as well as the protozoan pathogen T.gondii. Exhibits antiviral activity against influenza virus. The polypeptide is Guanylate-binding protein 1 (Homo sapiens (Human)).